Here is a 212-residue protein sequence, read N- to C-terminus: Large ribosomal subunit protein uL3 (212 aa).

The segment at 136 to 155 (THGNSLSHRSNGSIGQNQTP) is disordered. The residue at position 153 (glutamine 153) is an N5-methylglutamine.

The protein belongs to the universal ribosomal protein uL3 family. Part of the 50S ribosomal subunit. Forms a cluster with proteins L14 and L19. Methylated by PrmB.

Its function is as follows. One of the primary rRNA binding proteins, it binds directly near the 3'-end of the 23S rRNA, where it nucleates assembly of the 50S subunit. This Shewanella baltica (strain OS223) protein is Large ribosomal subunit protein uL3.